A 110-amino-acid polypeptide reads, in one-letter code: UPF0060 membrane protein RSp1275 (110 aa).

The next 4 membrane-spanning stretches (helical) occupy residues 8-28, 33-53, 63-83, and 90-110; these read FLFA…WLVL, SAWL…LLTL, AAYG…VDGA, and IGGA…PQPT.

The protein belongs to the UPF0060 family.

The protein resides in the cell inner membrane. In Ralstonia nicotianae (strain ATCC BAA-1114 / GMI1000) (Ralstonia solanacearum), this protein is UPF0060 membrane protein RSp1275.